The chain runs to 307 residues: Protoheme IX farnesyltransferase (307 aa).

Transmembrane regions (helical) follow at residues 33–53 (IGIV…AFYF), 62–82 (LHIV…SCSI), 111–131 (RVLW…LMTT), 132–152 (VTAA…YTLW), 159–179 (LNTV…WTAV), 185–205 (IVPL…FLAL), 229–249 (MTKR…FYLF), 251–271 (LGIP…LLGL), and 287–307 (FVYS…ATIW).

This sequence belongs to the UbiA prenyltransferase family. Protoheme IX farnesyltransferase subfamily. In terms of assembly, interacts with CtaA.

It localises to the cell membrane. The catalysed reaction is heme b + (2E,6E)-farnesyl diphosphate + H2O = Fe(II)-heme o + diphosphate. It functions in the pathway porphyrin-containing compound metabolism; heme O biosynthesis; heme O from protoheme: step 1/1. Its function is as follows. Converts heme B (protoheme IX) to heme O by substitution of the vinyl group on carbon 2 of heme B porphyrin ring with a hydroxyethyl farnesyl side group. The sequence is that of Protoheme IX farnesyltransferase from Geobacillus thermodenitrificans (strain NG80-2).